The sequence spans 348 residues: Phospho-2-dehydro-3-deoxyheptonate aldolase, Trp-sensitive (348 aa).

It belongs to the class-I DAHP synthase family.

It catalyses the reaction D-erythrose 4-phosphate + phosphoenolpyruvate + H2O = 7-phospho-2-dehydro-3-deoxy-D-arabino-heptonate + phosphate. The protein operates within metabolic intermediate biosynthesis; chorismate biosynthesis; chorismate from D-erythrose 4-phosphate and phosphoenolpyruvate: step 1/7. Functionally, stereospecific condensation of phosphoenolpyruvate (PEP) and D-erythrose-4-phosphate (E4P) giving rise to 3-deoxy-D-arabino-heptulosonate-7-phosphate (DAHP). The protein is Phospho-2-dehydro-3-deoxyheptonate aldolase, Trp-sensitive (aroH) of Salmonella typhi.